Here is a 253-residue protein sequence, read N- to C-terminus: Proteasome subunit alpha (253 aa).

Residues 232–242 are compositionally biased toward low complexity; sequence AAGASTAGEAG. Residues 232-253 form a disordered region; the sequence is AAGASTAGEAGSAEDEGSDDEK. Residues 243–253 are compositionally biased toward acidic residues; it reads SAEDEGSDDEK.

Belongs to the peptidase T1A family. The 20S proteasome core is composed of 14 alpha and 14 beta subunits that assemble into four stacked heptameric rings, resulting in a barrel-shaped structure. The two inner rings, each composed of seven catalytic beta subunits, are sandwiched by two outer rings, each composed of seven alpha subunits. The catalytic chamber with the active sites is on the inside of the barrel. Has a gated structure, the ends of the cylinder being occluded by the N-termini of the alpha-subunits. Is capped by the proteasome-associated ATPase, ARC.

The protein localises to the cytoplasm. Its pathway is protein degradation; proteasomal Pup-dependent pathway. With respect to regulation, the formation of the proteasomal ATPase ARC-20S proteasome complex, likely via the docking of the C-termini of ARC into the intersubunit pockets in the alpha-rings, may trigger opening of the gate for substrate entry. Interconversion between the open-gate and close-gate conformations leads to a dynamic regulation of the 20S proteasome proteolysis activity. Its function is as follows. Component of the proteasome core, a large protease complex with broad specificity involved in protein degradation. The chain is Proteasome subunit alpha from Streptomyces avermitilis (strain ATCC 31267 / DSM 46492 / JCM 5070 / NBRC 14893 / NCIMB 12804 / NRRL 8165 / MA-4680).